The chain runs to 113 residues: Iron-sulfur cluster assembly protein CyaY (113 aa).

The protein belongs to the frataxin family.

Functionally, involved in iron-sulfur (Fe-S) cluster assembly. May act as a regulator of Fe-S biogenesis. This is Iron-sulfur cluster assembly protein CyaY from Ralstonia nicotianae (strain ATCC BAA-1114 / GMI1000) (Ralstonia solanacearum).